A 370-amino-acid chain; its full sequence is UDP-N-acetylglucosamine--N-acetylmuramyl-(pentapeptide) pyrophosphoryl-undecaprenol N-acetylglucosamine transferase (370 aa).

Residues 20 to 22 (TAG), asparagine 134, arginine 170, serine 204, isoleucine 257, and glutamine 301 contribute to the UDP-N-acetyl-alpha-D-glucosamine site.

The protein belongs to the glycosyltransferase 28 family. MurG subfamily.

It is found in the cell membrane. It catalyses the reaction di-trans,octa-cis-undecaprenyl diphospho-N-acetyl-alpha-D-muramoyl-L-alanyl-D-glutamyl-meso-2,6-diaminopimeloyl-D-alanyl-D-alanine + UDP-N-acetyl-alpha-D-glucosamine = di-trans,octa-cis-undecaprenyl diphospho-[N-acetyl-alpha-D-glucosaminyl-(1-&gt;4)]-N-acetyl-alpha-D-muramoyl-L-alanyl-D-glutamyl-meso-2,6-diaminopimeloyl-D-alanyl-D-alanine + UDP + H(+). Its pathway is cell wall biogenesis; peptidoglycan biosynthesis. Functionally, cell wall formation. Catalyzes the transfer of a GlcNAc subunit on undecaprenyl-pyrophosphoryl-MurNAc-pentapeptide (lipid intermediate I) to form undecaprenyl-pyrophosphoryl-MurNAc-(pentapeptide)GlcNAc (lipid intermediate II). The sequence is that of UDP-N-acetylglucosamine--N-acetylmuramyl-(pentapeptide) pyrophosphoryl-undecaprenol N-acetylglucosamine transferase from Corynebacterium jeikeium (strain K411).